Here is a 338-residue protein sequence, read N- to C-terminus: Tetraacyldisaccharide 4'-kinase (338 aa).

Residue Val53–Thr60 participates in ATP binding.

This sequence belongs to the LpxK family.

The enzyme catalyses a lipid A disaccharide + ATP = a lipid IVA + ADP + H(+). It functions in the pathway glycolipid biosynthesis; lipid IV(A) biosynthesis; lipid IV(A) from (3R)-3-hydroxytetradecanoyl-[acyl-carrier-protein] and UDP-N-acetyl-alpha-D-glucosamine: step 6/6. Transfers the gamma-phosphate of ATP to the 4'-position of a tetraacyldisaccharide 1-phosphate intermediate (termed DS-1-P) to form tetraacyldisaccharide 1,4'-bis-phosphate (lipid IVA). The chain is Tetraacyldisaccharide 4'-kinase from Polaromonas sp. (strain JS666 / ATCC BAA-500).